The primary structure comprises 161 residues: Nucleotide-binding protein BTH_I0730 (161 aa).

The protein belongs to the YajQ family.

Functionally, nucleotide-binding protein. In Burkholderia thailandensis (strain ATCC 700388 / DSM 13276 / CCUG 48851 / CIP 106301 / E264), this protein is Nucleotide-binding protein BTH_I0730.